A 583-amino-acid chain; its full sequence is Membrane protein insertase YidC (583 aa).

A helical transmembrane segment spans residues 5-25 (SVTGLALIALIMIVWLQFMSP). The tract at residues 28-50 (KSVQPDNRPKAQTTATVSQEKTE) is disordered. A compositionally biased stretch (polar residues) spans 37–46 (KAQTTATVSQ). 5 helical membrane-spanning segments follow: residues 341 to 361 (PFAEYVILPVFTWMNGFISNY), 362 to 382 (GLIIIIFALLIKLVTYPLSMA), 427 to 447 (LGGCLPVVLQMPLLFAMFYVF), 477 to 497 (IPVYGDHIAVFPILMGVTVFI), and 515 to 535 (LYIFPVTMLLFFNNLPAGLGL).

Belongs to the OXA1/ALB3/YidC family. Type 1 subfamily. As to quaternary structure, interacts with the Sec translocase complex via SecD. Specifically interacts with transmembrane segments of nascent integral membrane proteins during membrane integration.

It is found in the cell inner membrane. Required for the insertion and/or proper folding and/or complex formation of integral membrane proteins into the membrane. Involved in integration of membrane proteins that insert both dependently and independently of the Sec translocase complex, as well as at least some lipoproteins. Aids folding of multispanning membrane proteins. This is Membrane protein insertase YidC from Chlorobium limicola (strain DSM 245 / NBRC 103803 / 6330).